The sequence spans 457 residues: uncharacterized protein (457 aa).

The region spanning 5–63 (PVEEGQKFPLTIRRMGINGEGIGYFKKAVVFVPGAITGEEVVVEAVKVRDRFTEAKLNK) is the TRAM domain. 4 residues coordinate [4Fe-4S] cluster: Cys-76, Cys-82, Cys-85, and Cys-166. Residues Gln-290, Tyr-319, Asp-340, and Asp-388 each coordinate S-adenosyl-L-methionine. Residue Cys-415 is the Nucleophile of the active site.

Belongs to the class I-like SAM-binding methyltransferase superfamily. RNA M5U methyltransferase family.

This is an uncharacterized protein from Listeria innocua serovar 6a (strain ATCC BAA-680 / CLIP 11262).